The following is a 395-amino-acid chain: Dihydroorotate dehydrogenase (quinone), mitochondrial (395 aa).

Residues 1–10 constitute a mitochondrion; not cleaved transit peptide; it reads MAWRHLKKRA. The Mitochondrial matrix segment spans residues 1–10; the sequence is MAWRHLKKRA. The chain crosses the membrane as a helical span at residues 11–30; it reads QDAVIILGGGGLLFASYLMA. Topologically, residues 31–395 are mitochondrial intermembrane; sequence TGDERFYAEH…TDAIGADHRR (365 aa). Residues 95 to 99 and serine 119 each bind FMN; that span reads AGFDK. Lysine 99 contacts substrate. Substrate is bound at residue 144–148; sequence NRYGF. FMN contacts are provided by asparagine 180 and asparagine 211. 211-216 provides a ligand contact to substrate; sequence NVSSPN. Serine 214 acts as the Nucleophile in catalysis. Residues lysine 254 and threonine 282 each contribute to the FMN site. A substrate-binding site is contributed by 283–284; sequence NT. Residues glycine 305, glycine 334, and 355–356 contribute to the FMN site; that span reads YT.

The protein belongs to the dihydroorotate dehydrogenase family. Type 2 subfamily. As to quaternary structure, monomer. The cofactor is FMN. Post-translationally, the uncleaved transit peptide is required for mitochondrial targeting and proper membrane integration.

It localises to the mitochondrion inner membrane. It carries out the reaction (S)-dihydroorotate + a quinone = orotate + a quinol. The protein operates within pyrimidine metabolism; UMP biosynthesis via de novo pathway; orotate from (S)-dihydroorotate (quinone route): step 1/1. Its function is as follows. Catalyzes the conversion of dihydroorotate to orotate with quinone as electron acceptor. Required for UMP biosynthesis via de novo pathway. In Homo sapiens (Human), this protein is Dihydroorotate dehydrogenase (quinone), mitochondrial (DHODH).